We begin with the raw amino-acid sequence, 157 residues long: Vesicle transport protein SFT2B (157 aa).

M1 carries the post-translational modification N-acetylmethionine. The Cytoplasmic segment spans residues 1-36 (MDKLKKVLSGQDTEDRSGLSEVVESSSLSWSTRIKG). S9 is modified (phosphoserine). Residues 37 to 57 (FIVCFALGILCSLLGTLLLWV) traverse the membrane as a helical segment. Residues 58-61 (SRKG) are Lumenal-facing. A helical membrane pass occupies residues 62 to 82 (LFAVFYTLGNITSIGSTMFLM). The Cytoplasmic portion of the chain corresponds to 83 to 96 (GPLKQLKRMFEPTR). The helical transmembrane segment at 97–117 (LIATILVLLFFVLTLCSAFLW) threads the bilayer. At 118 to 120 (NKG) the chain is on the lumenal side. The chain crosses the membrane as a helical span at residues 121–141 (LALIFCILQSLALTWYSLSYI). The Cytoplasmic portion of the chain corresponds to 142–157 (PYARDAVKKCFAVCLT).

This sequence belongs to the SFT2 family.

The protein resides in the membrane. Its function is as follows. May be involved in fusion of retrograde transport vesicles derived from an endocytic compartment with the Golgi complex. This is Vesicle transport protein SFT2B from Rattus norvegicus (Rat).